The primary structure comprises 617 residues: Kelch-like protein 9 (617 aa).

A BTB domain is found at 50-119 (CDVTLVPGDG…IYTAKLSLNM (70 aa)). The 102-residue stretch at 154 to 255 (CVEVGRIANT…TPQDLINYVQ (102 aa)) folds into the BACK domain. 6 Kelch repeats span residues 299–347 (HLVT…VIGN), 348–399 (FLYV…ALKG), 400–446 (HLYA…VYGG), 448–493 (MYIS…TVGD), 495–545 (LYVI…VFEN), and 546–594 (KIYV…TLTV). Residues 595 to 617 (FPPEENPGSPSRESPLSAPSDHS) are disordered.

In terms of assembly, component of the BCR(KLHL9-KLHL13) E3 ubiquitin ligase complex, at least composed of CUL3, KLHL9, KLHL13 and RBX1. Interacts with AURKB.

Its pathway is protein modification; protein ubiquitination. In terms of biological role, substrate-specific adapter of a BCR (BTB-CUL3-RBX1) E3 ubiquitin-protein ligase complex required for mitotic progression and cytokinesis. The BCR(KLHL9-KLHL13) E3 ubiquitin ligase complex mediates the ubiquitination of AURKB and controls the dynamic behavior of AURKB on mitotic chromosomes and thereby coordinates faithful mitotic progression and completion of cytokinesis. The chain is Kelch-like protein 9 (Klhl9) from Mus musculus (Mouse).